A 453-amino-acid polypeptide reads, in one-letter code: F-box protein SKIP14 (453 aa).

Residues 34–104 (RKNTGGDASS…NRQQLFAGLS (71 aa)) enclose the F-box; degenerate domain.

Part of a SCF (ASK-cullin-F-box) protein ligase complex. Interacts with CUL1, SKP1A/ASK1 and SPK1B/ASK2.

It functions in the pathway protein modification; protein ubiquitination. Component of SCF(ASK-cullin-F-box) E3 ubiquitin ligase complexes, which may mediate the ubiquitination and subsequent proteasomal degradation of target proteins. The chain is F-box protein SKIP14 (SKIP14) from Arabidopsis thaliana (Mouse-ear cress).